The chain runs to 443 residues: Probable glucomannan 4-beta-mannosyltransferase 11 (443 aa).

Residue aspartate 52 is part of the active site. Residues aspartate 111 and aspartate 113 each contribute to the substrate site. Aspartate 205 is a catalytic residue. The next 4 helical transmembrane spans lie at 284-304 (IIVH…SVFF), 321-341 (ITLF…FWVL), 400-420 (EMMV…FGKT), and 421-441 (VLYI…IGFI).

The protein belongs to the glycosyltransferase 2 family. Plant cellulose synthase-like A subfamily.

It localises to the golgi apparatus membrane. The enzyme catalyses GDP-mannose + (glucomannan)n = GDP + (glucomannan)n+1.. Probable mannan synthase which consists of a 4-beta-mannosyltransferase activity on mannan using GDP-mannose. The beta-1,4-mannan product is the backbone for galactomannan synthesis by galactomannan galactosyltransferase. Galactomannan is a noncellulosic polysaccharides of plant cell wall. This chain is Probable glucomannan 4-beta-mannosyltransferase 11, found in Arabidopsis thaliana (Mouse-ear cress).